A 607-amino-acid polypeptide reads, in one-letter code: Homologous recombination OB-fold protein (607 aa).

Disordered stretches follow at residues 25 to 49 (LRPNSSRPQETPQAHSSKLSPSYPA), 84 to 108 (ISSSSSGSQQRMTGTKVSQESSGRQ), 196 to 308 (PWPS…TTVT), and 531 to 581 (LKPP…DDLD). Polar residues-rich tracts occupy residues 27–49 (PNSSRPQETPQAHSSKLSPSYPA) and 92–108 (QQRMTGTKVSQESSGRQ). S30 carries the phosphoserine modification. Asymmetric dimethylarginine is present on R281. The span at 295–308 (SPFSTPRSTSTTVT) shows a compositional bias: low complexity. Positions 570–581 (PEEELPEADDLD) are enriched in acidic residues.

Interacts with MCM8; this interaction is necessary for MCM8-MCM9 helicase complex recruitment to DNA damage sites. Interacts with RPA1; this interaction associates HROB with the RPA complex.

It localises to the nucleus. It is found in the chromosome. Functionally, DNA-binding protein involved in homologous recombination that acts by recruiting the MCM8-MCM9 helicase complex to sites of DNA damage to promote DNA repair synthesis. The sequence is that of Homologous recombination OB-fold protein from Rattus norvegicus (Rat).